Reading from the N-terminus, the 151-residue chain is Large ribosomal subunit protein bL9 (151 aa).

Belongs to the bacterial ribosomal protein bL9 family.

In terms of biological role, binds to the 23S rRNA. This is Large ribosomal subunit protein bL9 from Lactobacillus johnsonii (strain CNCM I-12250 / La1 / NCC 533).